The primary structure comprises 141 residues: Ubiquitin-like protein ATG12 (141 aa).

Residues L24–K54 are disordered. G141 is covalently cross-linked (Glycyl lysine isopeptide (Gly-Lys) (interchain with K-? in acceptor protein)).

It belongs to the ATG12 family. In terms of assembly, forms a conjugate with ATG5. Part of the minor complex composed of 4 sets of ATG12-ATG5 and ATG16L1 (400 kDa); this complex interacts with ATG3 leading to disruption of ATG7 interaction and promotion of ATG8-like proteins lipidation. Forms an 800-kDa complex composed of ATG12-ATG5 and ATG16L2. Interacts with DHX58/RIG-1, IFIH1/MDA5 and MAVS/IPS-1 in monomeric form as well as in ATG12-ATG5 conjugate. The interaction with MAVS is further enhanced upon vesicular stomatitis virus (VSV) infection. Interacts with ATG3; this interaction is essential for phosphatidylethanolamine (PE)-conjugated ATG8-like proteins formation. Interacts with ATG7. Interacts with ATG10. The ATG12-ATG5 conjugate interacts with RAB33A; this interaction is bridged by ATG16L1 and promotes ATG12-ATG5-ATG16L1 complex recruitment to phagophores. Interacts with TECPR1. Interacts with SH3BGRL. The ATG12-ATG5 conjugate interacts with PDCD6IP (via the BRO1 domain); this interaction is bridged by ATG12 and promotes multiple PDCD6IP-mediated functions such as endolysosomal trafficking, macroautophagy and exosome biogenesis. Post-translationally, acetylated by EP300.

Its subcellular location is the cytoplasm. It localises to the preautophagosomal structure membrane. Ubiquitin-like protein involved in autophagy vesicles formation. Conjugation with ATG5 through a ubiquitin-like conjugating system involving also ATG7 as an E1-like activating enzyme and ATG10 as an E2-like conjugating enzyme, is essential for its function. The ATG12-ATG5 conjugate acts as an E3-like enzyme which is required for lipidation of ATG8 family proteins and their association to the vesicle membranes. The ATG12-ATG5 conjugate also negatively regulates the innate antiviral immune response by blocking the type I IFN production pathway through direct association with RARRES3 and MAVS. Also plays a role in translation or delivery of incoming viral RNA to the translation apparatus. As part of the ATG8 conjugation system with ATG5 and ATG16L1, required for recruitment of LRRK2 to stressed lysosomes and induction of LRRK2 kinase activity in response to lysosomal stress. The polypeptide is Ubiquitin-like protein ATG12 (Rattus norvegicus (Rat)).